We begin with the raw amino-acid sequence, 130 residues long: Protachykinin-1 (130 aa).

The N-terminal stretch at 1–19 (MKILVAVAVIFFISTQLSA) is a signal peptide. Positions 20 to 56 (EEIGANDDFNYWSDWSDSDQIKEEMPEPFEHLLQRIA) are excised as a propeptide. 2 positions are modified to methionine amide: M68 and M107.

The protein belongs to the tachykinin family. Post-translationally, the substance P form is cleaved at Pro-59 by the prolyl endopeptidase FAP (seprase) activity (in vitro). Substance P is also cleaved and degraded by Angiotensin-converting enzyme (ACE) and neprilysin (MME).

It is found in the secreted. In terms of biological role, tachykinins are active peptides which excite neurons, evoke behavioral responses, are potent vasodilators and secretagogues, and contract (directly or indirectly) many smooth muscles. The polypeptide is Protachykinin-1 (TAC1) (Bos taurus (Bovine)).